Reading from the N-terminus, the 1234-residue chain is Complement factor H (1234 aa).

Positions 1 to 18 (MRLSARIIWLILWTVCAA) are cleaved as a signal peptide. 20 Sushi domains span residues 19 to 82 (EDCK…ICRK), 83 to 143 (KPCG…LCEV), 144 to 207 (VKCL…RCVE), 208 to 264 (ILCT…FCEE), 265 to 322 (KRCS…RCTL), 324 to 386 (PCEF…VPCV), 387 to 444 (RKCV…KCIR), 446 to 507 (KTCS…SCIK), 508 to 566 (SCDM…SCYE), 567 to 624 (RECS…TCKG), 627 to 685 (ASCA…VCIE), 688 to 745 (RTCG…KCVA), 750 to 804 (EKCR…NCTS), 806 to 863 (TSCP…RCIE), 865 to 933 (IPCS…RCVG), 934 to 991 (LPCG…KCIK), 992 to 1050 (TDCD…VCKD), 1051 to 1109 (NSCV…KCRD), 1112 to 1170 (GKCG…TCLH), and 1171 to 1234 (ACVI…PTCV). 40 disulfide bridges follow: C21–C66, C52–C80, C85–C129, C114–C141, C146–C192, C178–C205, C210–C251, C237–C262, C267–C309, C294–C320, C325–C374, C357–C385, C389–C431, C416–C442, C448–C494, C477–C505, C509–C553, C536–C564, C569–C610, C597–C622, C629–C672, C658–C683, C690–C732, C718–C743, C752–C791, C780–C802, C808–C850, C836–C861, C867–C920, C906–C931, C936–C978, C964–C989, C994–C1037, C1023–C1048, C1053–C1096, C1082–C1107, C1114–C1157, C1143–C1168, C1172–C1223, and C1206–C1233. N-linked (GlcNAc...) asparagine glycans are attached at residues N676, N721, N773, and N801. Positions 872–896 (TIEHGSINLPRSSEERRDSIESSSH) are disordered. The span at 883–896 (SSEERRDSIESSSH) shows a compositional bias: basic and acidic residues. 2 N-linked (GlcNAc...) asparagine glycosylation sites follow: N1030 and N1061. Residue S1198 is modified to Phosphoserine. N1225 carries N-linked (GlcNAc...) asparagine glycosylation.

In terms of assembly, homodimer. Also forms homooligomers. Interacts with complement protein C3b; this interaction inhibits complement activation. Interacts with complement protein C3d. Interacts with CR3/ITGAM; this interaction mediates adhesion of neutrophils to pathogens leading to pathogen clearance. Post-translationally, sulfated on tyrosine residues. In terms of tissue distribution, CFH is one of the most abundant complement components in blood where the liver is the major source of CFH protein in vivo. in addition, CFH is secreted by additional cell types including monocytes, fibroblasts, or endothelial cells.

Its subcellular location is the secreted. In terms of biological role, glycoprotein that plays an essential role in maintaining a well-balanced immune response by modulating complement activation. Acts as a soluble inhibitor of complement, where its binding to self markers such as glycan structures prevents complement activation and amplification on cell surfaces. Accelerates the decay of the complement alternative pathway (AP) C3 convertase C3bBb, thus preventing local formation of more C3b, the central player of the complement amplification loop. As a cofactor of the serine protease factor I, CFH also regulates proteolytic degradation of already-deposited C3b. In addition, mediates several cellular responses through interaction with specific receptors. For example, interacts with CR3/ITGAM receptor and thereby mediates the adhesion of human neutrophils to different pathogens. In turn, these pathogens are phagocytosed and destroyed. This Mus musculus (Mouse) protein is Complement factor H (Cfh).